The sequence spans 474 residues: Bifunctional protein GlmU (474 aa).

Positions 1 to 232 (MSALDVIIMA…ALQVAGVNSP (232 aa)) are pyrophosphorylase. Residues K23, Q78, 83–84 (GT), 105–107 (SGD), G142, E157, and N230 each bind UDP-N-acetyl-alpha-D-glucosamine. A Mg(2+)-binding site is contributed by D107. N230 provides a ligand contact to Mg(2+). Positions 233 to 253 (LQLAELERAHQLAQARALMEQ) are linker. Residues 254 to 474 (GVRLADPARF…WQRPAKLPKA (221 aa)) are N-acetyltransferase. The UDP-N-acetyl-alpha-D-glucosamine site is built by R349 and K367. The active-site Proton acceptor is H379. UDP-N-acetyl-alpha-D-glucosamine is bound by residues Y382 and N393. Acetyl-CoA is bound by residues A396, 402–403 (NY), S421, G439, and R456. Positions 454 to 474 (VARGKQVTKENWQRPAKLPKA) are disordered.

This sequence in the N-terminal section; belongs to the N-acetylglucosamine-1-phosphate uridyltransferase family. The protein in the C-terminal section; belongs to the transferase hexapeptide repeat family. Homotrimer. Mg(2+) is required as a cofactor.

The protein localises to the cytoplasm. It carries out the reaction alpha-D-glucosamine 1-phosphate + acetyl-CoA = N-acetyl-alpha-D-glucosamine 1-phosphate + CoA + H(+). The enzyme catalyses N-acetyl-alpha-D-glucosamine 1-phosphate + UTP + H(+) = UDP-N-acetyl-alpha-D-glucosamine + diphosphate. The protein operates within nucleotide-sugar biosynthesis; UDP-N-acetyl-alpha-D-glucosamine biosynthesis; N-acetyl-alpha-D-glucosamine 1-phosphate from alpha-D-glucosamine 6-phosphate (route II): step 2/2. It functions in the pathway nucleotide-sugar biosynthesis; UDP-N-acetyl-alpha-D-glucosamine biosynthesis; UDP-N-acetyl-alpha-D-glucosamine from N-acetyl-alpha-D-glucosamine 1-phosphate: step 1/1. It participates in bacterial outer membrane biogenesis; LPS lipid A biosynthesis. Catalyzes the last two sequential reactions in the de novo biosynthetic pathway for UDP-N-acetylglucosamine (UDP-GlcNAc). The C-terminal domain catalyzes the transfer of acetyl group from acetyl coenzyme A to glucosamine-1-phosphate (GlcN-1-P) to produce N-acetylglucosamine-1-phosphate (GlcNAc-1-P), which is converted into UDP-GlcNAc by the transfer of uridine 5-monophosphate (from uridine 5-triphosphate), a reaction catalyzed by the N-terminal domain. The protein is Bifunctional protein GlmU of Paracidovorax citrulli (strain AAC00-1) (Acidovorax citrulli).